The sequence spans 280 residues: Probable endonuclease 4 (280 aa).

His69, His109, Glu145, Asp179, His182, His216, Asp229, His231, and Glu261 together coordinate Zn(2+).

Belongs to the AP endonuclease 2 family. Requires Zn(2+) as cofactor.

The enzyme catalyses Endonucleolytic cleavage to 5'-phosphooligonucleotide end-products.. In terms of biological role, endonuclease IV plays a role in DNA repair. It cleaves phosphodiester bonds at apurinic or apyrimidinic (AP) sites, generating a 3'-hydroxyl group and a 5'-terminal sugar phosphate. The protein is Probable endonuclease 4 of Photorhabdus laumondii subsp. laumondii (strain DSM 15139 / CIP 105565 / TT01) (Photorhabdus luminescens subsp. laumondii).